Consider the following 284-residue polypeptide: GPN-loop GTPase 3 (284 aa).

Residue 13–18 participates in GTP binding; the sequence is GSGKST. Positions 72–74 match the Gly-Pro-Asn (GPN)-loop; involved in dimer interface motif; the sequence is GPN. 174–177 contributes to the GTP binding site; it reads TKMD. Residues 261-284 form a disordered region; the sequence is KEPKEHEEESSSMFDEYFQERQNE.

This sequence belongs to the GPN-loop GTPase family. As to quaternary structure, heterodimer with GPN1. Binds to RNA polymerase II (RNAPII). Interacts directly with subunits RPB4 and RPB7 and the CTD of RPB1.

In terms of biological role, small GTPase required for proper localization of RNA polymerase II (RNAPII). May act at an RNAP assembly step prior to nuclear import. The chain is GPN-loop GTPase 3 from Rattus norvegicus (Rat).